The primary structure comprises 174 residues: Shikimate kinase (174 aa).

An ATP-binding site is contributed by 15–20 (GTGKST). Ser-19 contacts Mg(2+). Positions 37, 61, and 82 each coordinate substrate. Arg-120 contacts ATP. A substrate-binding site is contributed by Arg-138.

Belongs to the shikimate kinase family. As to quaternary structure, monomer. Mg(2+) serves as cofactor.

The protein resides in the cytoplasm. It catalyses the reaction shikimate + ATP = 3-phosphoshikimate + ADP + H(+). The protein operates within metabolic intermediate biosynthesis; chorismate biosynthesis; chorismate from D-erythrose 4-phosphate and phosphoenolpyruvate: step 5/7. Functionally, catalyzes the specific phosphorylation of the 3-hydroxyl group of shikimic acid using ATP as a cosubstrate. The sequence is that of Shikimate kinase from Staphylococcus aureus (strain Mu3 / ATCC 700698).